The chain runs to 270 residues: Phosphatidate cytidylyltransferase (270 aa).

Transmembrane regions (helical) follow at residues 19–39 (LWLT…IGLA), 53–73 (TAFS…LLIL), 76–96 (GALL…VTQW), 101–121 (GWPA…SLLR), 126–146 (FGFT…IAAY), 183–203 (LVAS…ALLL), and 248–268 (ALLY…AIFF).

This sequence belongs to the CDS family.

It localises to the cell inner membrane. The enzyme catalyses a 1,2-diacyl-sn-glycero-3-phosphate + CTP + H(+) = a CDP-1,2-diacyl-sn-glycerol + diphosphate. Its pathway is phospholipid metabolism; CDP-diacylglycerol biosynthesis; CDP-diacylglycerol from sn-glycerol 3-phosphate: step 3/3. This chain is Phosphatidate cytidylyltransferase (cdsA), found in Brucella suis biovar 1 (strain 1330).